Here is a 703-residue protein sequence, read N- to C-terminus: Calpain-8 (703 aa).

A Calpain catalytic domain is found at 45–344 (LFKDPEFPAC…FSRLEICNLS (300 aa)). Catalysis depends on residues Cys-105, His-262, and Asn-286. Residues 355–512 (KWNLVLFNGR…VFSEKKAQAL (158 aa)) form a domain III region. A linker region spans residues 513 to 531 (EIGDAVPGDPHEPHPRDMD). 4 EF-hand domains span residues 531–566 (DGED…LLSK), 575–610 (FNIN…ICKY), 605–640 (LKIC…AGFT), and 670–703 (IRLE…RALV). A domain IV region spans residues 532–703 (GEDEHFWSLS…LAEWLCRALV (172 aa)). Residues Asp-588, Asp-590, Thr-592, Ser-594, Glu-599, Asp-618, Ser-620, Thr-624, and Glu-629 each contribute to the Ca(2+) site.

This sequence belongs to the peptidase C2 family. In terms of assembly, monomer and homooligomer. Interacts with COPS1/GPS1, COPB1, EYA2, NME2, NME4 and TOMM70. Ca(2+) is required as a cofactor. In terms of processing, undergoes autolytic cleavage between Ala-5 and Ala-6 which gives rise to fragments extending from Ala-6 to the C-terminus, Ala-6 to the EF-hand 2 domain and from Ala-6 to the beginning of domain III. Predominantly expressed in the stomach. Localizes strictly to the surface mucus cells in the gastric epithelium and the mucus-secreting goblet cells in the duodenum.

Its subcellular location is the cytoplasm. It localises to the golgi apparatus. It catalyses the reaction Broad endopeptidase specificity.. With respect to regulation, the concentration of calcium for half-maximal activity is 0.3 mM. Inhibited by calpastatin and calpeptin. In terms of biological role, calcium-regulated non-lysosomal thiol-protease. Involved in membrane trafficking in the gastric surface mucus cells (pit cells) and may involve the membrane trafficking of mucus cells via interactions with coat protein. Proteolytically cleaves the beta-subunit of coatomer complex. This Mus musculus (Mouse) protein is Calpain-8 (Capn8).